Here is a 373-residue protein sequence, read N- to C-terminus: Dual-specificity RNA methyltransferase RlmN (373 aa).

The active-site Proton acceptor is the E94. The region spanning 100–339 is the Radical SAM core domain; the sequence is EDDRATLCVS…VIVRKTRGDD (240 aa). C107 and C344 are oxidised to a cystine. The [4Fe-4S] cluster site is built by C114, C118, and C121. S-adenosyl-L-methionine contacts are provided by residues 168 to 169, S200, 222 to 224, and N301; these read GE and SIH. C344 (S-methylcysteine intermediate) is an active-site residue.

The protein belongs to the radical SAM superfamily. RlmN family. [4Fe-4S] cluster is required as a cofactor.

The protein resides in the cytoplasm. It carries out the reaction adenosine(2503) in 23S rRNA + 2 reduced [2Fe-2S]-[ferredoxin] + 2 S-adenosyl-L-methionine = 2-methyladenosine(2503) in 23S rRNA + 5'-deoxyadenosine + L-methionine + 2 oxidized [2Fe-2S]-[ferredoxin] + S-adenosyl-L-homocysteine. The catalysed reaction is adenosine(37) in tRNA + 2 reduced [2Fe-2S]-[ferredoxin] + 2 S-adenosyl-L-methionine = 2-methyladenosine(37) in tRNA + 5'-deoxyadenosine + L-methionine + 2 oxidized [2Fe-2S]-[ferredoxin] + S-adenosyl-L-homocysteine. Functionally, specifically methylates position 2 of adenine 2503 in 23S rRNA and position 2 of adenine 37 in tRNAs. m2A2503 modification seems to play a crucial role in the proofreading step occurring at the peptidyl transferase center and thus would serve to optimize ribosomal fidelity. The sequence is that of Dual-specificity RNA methyltransferase RlmN from Shewanella baltica (strain OS185).